A 511-amino-acid chain; its full sequence is Alpha-amylase 1 (511 aa).

The N-terminal stretch at 1–15 (MKFFLLLSLIGFCWA) is a signal peptide. Glutamine 16 carries the post-translational modification Pyrrolidone carboxylic acid. 3 cysteine pairs are disulfide-bonded: cysteine 43-cysteine 101, cysteine 85-cysteine 130, and cysteine 156-cysteine 175. Positions 115, 173, and 182 each coordinate Ca(2+). Arginine 210 is a binding site for chloride. Aspartate 212 (nucleophile) is an active-site residue. Position 216 (histidine 216) interacts with Ca(2+). The Proton donor role is filled by glutamate 248. Chloride is bound by residues asparagine 313 and arginine 352. 2 disulfides stabilise this stretch: cysteine 393-cysteine 399 and cysteine 465-cysteine 477.

The protein belongs to the glycosyl hydrolase 13 family. Monomer. Requires Ca(2+) as cofactor. The cofactor is chloride. Expressed in liver and saliva.

It is found in the secreted. It carries out the reaction Endohydrolysis of (1-&gt;4)-alpha-D-glucosidic linkages in polysaccharides containing three or more (1-&gt;4)-alpha-linked D-glucose units.. The chain is Alpha-amylase 1 (Amy1) from Mus musculus (Mouse).